The following is a 503-amino-acid chain: Cytochrome c lysine N-methyltransferase 1 (503 aa).

An SET domain is found at 52–276 (SKFELLRIPR…EEAQVFISYA (225 aa)). The tract at residues 190 to 291 (NYEKLISTVY…VHFEQIYGFL (102 aa)) is SET-like.

This sequence belongs to the class V-like SAM-binding methyltransferase superfamily.

It localises to the cytoplasm. It is found in the cytosol. The catalysed reaction is L-lysyl-[cytochrome c] + S-adenosyl-L-methionine = N(6)-methyl-L-lysyl-[cytochrome c] + S-adenosyl-L-homocysteine + H(+). Its function is as follows. Methyltransferase which mediates trimethylation of cytochrome c (CYC1). The sequence is that of Cytochrome c lysine N-methyltransferase 1 (CTM1) from Kluyveromyces lactis (strain ATCC 8585 / CBS 2359 / DSM 70799 / NBRC 1267 / NRRL Y-1140 / WM37) (Yeast).